Consider the following 144-residue polypeptide: Large ribosomal subunit protein uL15 (144 aa).

Positions 1–58 are disordered; the sequence is MRLNTLAPAAGSKHAPKRVGRGIGSGLGKTGGRGHKGQKSRSGGKVRPGFEGGQMPLK. The span at 21–31 shows a compositional bias: gly residues; that stretch reads RGIGSGLGKTG. Residues 32-44 are compositionally biased toward basic residues; that stretch reads GRGHKGQKSRSGG.

It belongs to the universal ribosomal protein uL15 family. Part of the 50S ribosomal subunit.

Its function is as follows. Binds to the 23S rRNA. This is Large ribosomal subunit protein uL15 from Vibrio parahaemolyticus serotype O3:K6 (strain RIMD 2210633).